The sequence spans 90 residues: Co-chaperonin GroES (90 aa).

This sequence belongs to the GroES chaperonin family. Heptamer of 7 subunits arranged in a ring. Interacts with the chaperonin GroEL.

The protein resides in the cytoplasm. Its function is as follows. Together with the chaperonin GroEL, plays an essential role in assisting protein folding. The GroEL-GroES system forms a nano-cage that allows encapsulation of the non-native substrate proteins and provides a physical environment optimized to promote and accelerate protein folding. GroES binds to the apical surface of the GroEL ring, thereby capping the opening of the GroEL channel. This chain is Co-chaperonin GroES, found in Fusobacterium nucleatum subsp. polymorphum (Fusobacterium polymorphum).